A 91-amino-acid polypeptide reads, in one-letter code: Small ribosomal subunit protein bS16 (91 aa).

Belongs to the bacterial ribosomal protein bS16 family. Part of the 30S ribosomal subunit.

Functionally, binds to the lower part of the body of the 30S subunit, where it stabilizes two of its domains. The polypeptide is Small ribosomal subunit protein bS16 (Thermus thermophilus).